We begin with the raw amino-acid sequence, 581 residues long: Pre-mRNA 3'-end-processing factor FIP1 (581 aa).

2 stretches are compositionally biased toward basic and acidic residues: residues Met1–Val10 and Val32–Leu42. 3 disordered regions span residues Met1–Val95, Thr211–Asp282, and Arg320–Glu581. Positions Met1–Gly110 are sufficient for interaction with PAPOLA. The interval Met1–Pro332 is necessary for stimulating PAPOLA activity. 2 stretches are compositionally biased toward acidic residues: residues Asp43–Asn54 and Thr80–Asp94. Phosphoserine is present on residues Ser84, Ser86, and Ser88. Positions Lys136–Asn219 are sufficient for interaction with CPSF4. The segment covering Ser247–Ser267 has biased composition (low complexity). Positions Trp271 to Asp282 are enriched in basic and acidic residues. At Ser280 the chain carries Phosphoserine. The span at Arg320 to Ser330 shows a compositional bias: polar residues. Positions Lys331–Leu389 are enriched in pro residues. Position 411 is a phosphotyrosine (Tyr411). The segment covering Leu419–Gln435 has biased composition (polar residues). A sufficient for interaction with CPSF1 and CSTF3 region spans residues Ser428–Glu581. Over residues Tyr439–Ser479 the composition is skewed to basic and acidic residues. Residues Arg442–Asp477 are arg/Asp/Glu-rich domain. Residues His478–Ser535 are sufficient for interaction with AHCYL1. Position 479 is a phosphoserine (Ser479). Thr481 is subject to Phosphothreonine. A phosphoserine mark is found at Ser483 and Ser487. The segment covering Asp488 to His515 has biased composition (basic and acidic residues). A compositionally biased stretch (basic residues) spans Lys529–Arg538. Position 541 is a phosphoserine (Ser541). Residues His547–Arg557 are compositionally biased toward basic residues.

This sequence belongs to the FIP1 family. In terms of assembly, component of the cleavage and polyadenylation specificity factor (CPSF) complex, composed of CPSF1, CPSF2, CPSF3, CPSF4 and FIP1L1. Found in a complex with CPSF1, FIP1L1 and PAPOLA. Interacts with CPSF1, CPSF4, CSTF2 and CSTF3. Interacts with AHCYL1 (when phosphorylated); the interaction is direct and associates AHCYL1 with the CPSF complex and RNA. Interacts with PAPOLA; the interaction seems to be increased by the interaction with AHCYL1. Interacts with NUDT21/CPSF5; this interaction occurs in a RNA sequence-specific manner. Interacts (preferentially via unphosphorylated form and Arg/Glu/Asp-rich domain) with CPSF6 (via Arg/Ser-rich domain); this interaction mediates, at least in part, the interaction between the CFIm and CPSF complexes and may be inhibited by CPSF6 hyper-phosphorylation. Interacts (preferentially via unphosphorylated form and Arg/Asp/Glu-rich domain) with CPSF7 (via Arg/Ser-rich domain); this interaction mediates, at least in part, the interaction between the CFIm and CPSF complexes and may be inhibited by CPSF7 hyper-phosphorylation.

It localises to the nucleus. Functionally, component of the cleavage and polyadenylation specificity factor (CPSF) complex that plays a key role in pre-mRNA 3'-end formation, recognizing the AAUAAA signal sequence and interacting with poly(A) polymerase and other factors to bring about cleavage and poly(A) addition. FIP1L1 contributes to poly(A) site recognition and stimulates poly(A) addition. Binds to U-rich RNA sequence elements surrounding the poly(A) site. May act to tether poly(A) polymerase to the CPSF complex. This is Pre-mRNA 3'-end-processing factor FIP1 (Fip1l1) from Mus musculus (Mouse).